The chain runs to 280 residues: MKTNYEIRYAAHPEDARSYDTKRIRRDFLIEKVFSADEVNMVYSMYDRMVVGGAMPVKEVLKLEAIDPLKAPYFLTRREMGIFNVGGPGVVRAGDTIFQLDYKEALYLGAGDRDVTFESTDAAHPAKFYFNSLAAHRNYPDKKVTKADAVVAEMGTLEGSNHRNINKMLVNQVLPTCQLQMGMTELAPGSVWNTMPAHVHSRRMEAYFYFEVPEEHAVCHFMGEVDETRHVWMKGDQAVLSPEWSIHSAAATHNYTFIWGMGGENLDYGDQDFSLITDLK.

4 residues coordinate Zn(2+): histidine 198, histidine 200, glutamate 205, and histidine 247.

It belongs to the KduI family. Zn(2+) serves as cofactor.

It catalyses the reaction 5-dehydro-4-deoxy-D-glucuronate = 3-deoxy-D-glycero-2,5-hexodiulosonate. The protein operates within glycan metabolism; pectin degradation; 2-dehydro-3-deoxy-D-gluconate from pectin: step 4/5. Its function is as follows. Catalyzes the isomerization of 5-dehydro-4-deoxy-D-glucuronate to 3-deoxy-D-glycero-2,5-hexodiulosonate. This Bacteroides fragilis (strain YCH46) protein is 4-deoxy-L-threo-5-hexosulose-uronate ketol-isomerase.